The chain runs to 189 residues: HGPRTase-like protein (189 aa).

This sequence belongs to the purine/pyrimidine phosphoribosyltransferase family. Archaeal HPRT subfamily.

May catalyze a purine salvage reaction, the substrate is unknown. The protein is HGPRTase-like protein of Halorubrum lacusprofundi (strain ATCC 49239 / DSM 5036 / JCM 8891 / ACAM 34).